The following is a 439-amino-acid chain: 23S rRNA (uracil(1939)-C(5))-methyltransferase RlmD (439 aa).

Positions 1 to 54 (MTAPVLIESLDQEGRGVAHAEGKVIFIEGALPGEVVTYNAYRRKPSFELAQVGQ) constitute a TRAM domain. C67, C73, C76, and C155 together coordinate [4Fe-4S] cluster. S-adenosyl-L-methionine-binding residues include Q264, F293, N298, E314, N342, and D363. C391 (nucleophile) is an active-site residue.

Belongs to the class I-like SAM-binding methyltransferase superfamily. RNA M5U methyltransferase family. RlmD subfamily.

The catalysed reaction is uridine(1939) in 23S rRNA + S-adenosyl-L-methionine = 5-methyluridine(1939) in 23S rRNA + S-adenosyl-L-homocysteine + H(+). Its function is as follows. Catalyzes the formation of 5-methyl-uridine at position 1939 (m5U1939) in 23S rRNA. This is 23S rRNA (uracil(1939)-C(5))-methyltransferase RlmD from Nitrosospira multiformis (strain ATCC 25196 / NCIMB 11849 / C 71).